Reading from the N-terminus, the 197-residue chain is Protein GrpE (197 aa).

Residues 1–39 form a disordered region; that stretch reads MSSKEQKTPEGQAPEEIIMDQHEEIEAVEPEASAEQVDP.

The protein belongs to the GrpE family. In terms of assembly, homodimer.

Its subcellular location is the cytoplasm. Functionally, participates actively in the response to hyperosmotic and heat shock by preventing the aggregation of stress-denatured proteins, in association with DnaK and GrpE. It is the nucleotide exchange factor for DnaK and may function as a thermosensor. Unfolded proteins bind initially to DnaJ; upon interaction with the DnaJ-bound protein, DnaK hydrolyzes its bound ATP, resulting in the formation of a stable complex. GrpE releases ADP from DnaK; ATP binding to DnaK triggers the release of the substrate protein, thus completing the reaction cycle. Several rounds of ATP-dependent interactions between DnaJ, DnaK and GrpE are required for fully efficient folding. This Escherichia coli O45:K1 (strain S88 / ExPEC) protein is Protein GrpE.